The following is a 169-amino-acid chain: MPLLDSFTVDHTRMAAPAVRVAKTMQTPNKDTITVFDLRFCVPNQEILSERGIHTLEHLFAGFMRDHLNGNGVEIIDISPMGCRTGFYMSLIGAPDEARVGAAWQAAMSDVLTVQEQGKIPELNEYQCGTYSMHSLEEAHAIARHVLERGIGVNRNDELALPEEKLKSL.

Fe cation contacts are provided by H54, H58, and C128.

Belongs to the LuxS family. Homodimer. The cofactor is Fe cation.

It carries out the reaction S-(5-deoxy-D-ribos-5-yl)-L-homocysteine = (S)-4,5-dihydroxypentane-2,3-dione + L-homocysteine. In terms of biological role, involved in the synthesis of autoinducer 2 (AI-2) which is secreted by bacteria and is used to communicate both the cell density and the metabolic potential of the environment. The regulation of gene expression in response to changes in cell density is called quorum sensing. Catalyzes the transformation of S-ribosylhomocysteine (RHC) to homocysteine (HC) and 4,5-dihydroxy-2,3-pentadione (DPD). The protein is S-ribosylhomocysteine lyase of Aeromonas hydrophila subsp. hydrophila (strain ATCC 7966 / DSM 30187 / BCRC 13018 / CCUG 14551 / JCM 1027 / KCTC 2358 / NCIMB 9240 / NCTC 8049).